The chain runs to 500 residues: Na(+)/H(+) antiporter NhaB (500 aa).

Transmembrane regions (helical) follow at residues 34–54 (PLFF…EFIF), 62–82 (CYPL…GMTT), 90–110 (LVHN…IYFM), 129–149 (ALLG…LDAL), 150–170 (TVTA…HRVA), 205–225 (LLMH…VGEP), 241–261 (FFSK…VTCV), 311–331 (ILIV…LLVI), 350–370 (FKDA…VAVI), 394–414 (MLFI…VATI), 449–469 (VATP…IAPL), and 477–497 (MVWM…YAVS).

This sequence belongs to the NhaB Na(+)/H(+) (TC 2.A.34) antiporter family.

The protein resides in the cell inner membrane. It catalyses the reaction 2 Na(+)(in) + 3 H(+)(out) = 2 Na(+)(out) + 3 H(+)(in). Functionally, na(+)/H(+) antiporter that extrudes sodium in exchange for external protons. This is Na(+)/H(+) antiporter NhaB from Pseudomonas fluorescens (strain ATCC BAA-477 / NRRL B-23932 / Pf-5).